Consider the following 247-residue polypeptide: Dynein axonemal assembly factor 19 (247 aa).

Residues 12–32 (LEKELHSALQADRKYQRENDA) are a coiled coil.

It belongs to the DNAAF19/PR46b family. Homodimer. Expressed in all cells bearing motile cilia.

The protein resides in the cytoplasm. Its subcellular location is the cell projection. It is found in the cilium. It localises to the flagellum. Its function is as follows. Dynein-attachment factor required for cilia motility. This Danio rerio (Zebrafish) protein is Dynein axonemal assembly factor 19 (dnaaf19).